The chain runs to 91 residues: Small ribosomal subunit protein uS19 (91 aa).

This sequence belongs to the universal ribosomal protein uS19 family.

Its function is as follows. Protein S19 forms a complex with S13 that binds strongly to the 16S ribosomal RNA. This Pseudomonas paraeruginosa (strain DSM 24068 / PA7) (Pseudomonas aeruginosa (strain PA7)) protein is Small ribosomal subunit protein uS19.